We begin with the raw amino-acid sequence, 440 residues long: C4-dicarboxylate transport protein (440 aa).

Transmembrane regions (helical) follow at residues 15–35 (VLVA…TGVA), 46–66 (LIKM…IAGM), 78–98 (YALL…LVVV), 146–166 (AFAN…GFAL), 190–210 (IINM…AFTI), 224–244 (LMAC…GGIC), 291–311 (VVGL…SIYL), 332–352 (ITLL…TGSG), and 354–374 (IVLA…LALI). The disordered stretch occupies residues 419–440 (GGSPLVDTRPTDDLGVAEGPAR).

It belongs to the dicarboxylate/amino acid:cation symporter (DAACS) (TC 2.A.23) family.

The protein localises to the cell inner membrane. Functionally, responsible for the transport of dicarboxylates such as succinate, fumarate, and malate from the periplasm across the membrane. This is C4-dicarboxylate transport protein from Pseudomonas entomophila (strain L48).